The following is a 338-amino-acid chain: Glycerol-3-phosphate dehydrogenase [NAD(P)+] (338 aa).

Positions 12, 33, and 110 each coordinate NADPH. Sn-glycerol 3-phosphate-binding residues include K110, G142, and S144. A146 is a binding site for NADPH. Positions 197, 250, 260, 261, and 262 each coordinate sn-glycerol 3-phosphate. K197 acts as the Proton acceptor in catalysis. R261 serves as a coordination point for NADPH. V286 and E288 together coordinate NADPH.

Belongs to the NAD-dependent glycerol-3-phosphate dehydrogenase family.

The protein localises to the cytoplasm. The enzyme catalyses sn-glycerol 3-phosphate + NAD(+) = dihydroxyacetone phosphate + NADH + H(+). It carries out the reaction sn-glycerol 3-phosphate + NADP(+) = dihydroxyacetone phosphate + NADPH + H(+). The protein operates within membrane lipid metabolism; glycerophospholipid metabolism. Functionally, catalyzes the reduction of the glycolytic intermediate dihydroxyacetone phosphate (DHAP) to sn-glycerol 3-phosphate (G3P), the key precursor for phospholipid synthesis. This Acidobacterium capsulatum (strain ATCC 51196 / DSM 11244 / BCRC 80197 / JCM 7670 / NBRC 15755 / NCIMB 13165 / 161) protein is Glycerol-3-phosphate dehydrogenase [NAD(P)+].